Reading from the N-terminus, the 505-residue chain is Lysine--tRNA ligase (505 aa).

Mg(2+) contacts are provided by Glu415 and Glu422.

Belongs to the class-II aminoacyl-tRNA synthetase family. In terms of assembly, homodimer. Mg(2+) is required as a cofactor.

Its subcellular location is the cytoplasm. It carries out the reaction tRNA(Lys) + L-lysine + ATP = L-lysyl-tRNA(Lys) + AMP + diphosphate. The protein is Lysine--tRNA ligase of Shigella boydii serotype 4 (strain Sb227).